A 282-amino-acid chain; its full sequence is Undecaprenyl-diphosphatase (282 aa).

Transmembrane regions (helical) follow at residues 40–60, 85–105, 117–137, 158–178, 193–213, 231–251, and 258–278; these read GAAF…IYFF, AKMG…GLLF, YWIS…EWLI, ALII…RSGV, AARF…IYQL, IVAT…LITF, and AVFI…IATG.

It belongs to the UppP family.

It is found in the cell inner membrane. It catalyses the reaction di-trans,octa-cis-undecaprenyl diphosphate + H2O = di-trans,octa-cis-undecaprenyl phosphate + phosphate + H(+). Its function is as follows. Catalyzes the dephosphorylation of undecaprenyl diphosphate (UPP). Confers resistance to bacitracin. The sequence is that of Undecaprenyl-diphosphatase from Prosthecochloris aestuarii (strain DSM 271 / SK 413).